Reading from the N-terminus, the 477-residue chain is ATP synthase subunit beta (477 aa).

Residue 148–155 participates in ATP binding; sequence GGAGVGKT.

It belongs to the ATPase alpha/beta chains family. In terms of assembly, F-type ATPases have 2 components, CF(1) - the catalytic core - and CF(0) - the membrane proton channel. CF(1) has five subunits: alpha(3), beta(3), gamma(1), delta(1), epsilon(1). CF(0) has three main subunits: a(1), b(2) and c(9-12). The alpha and beta chains form an alternating ring which encloses part of the gamma chain. CF(1) is attached to CF(0) by a central stalk formed by the gamma and epsilon chains, while a peripheral stalk is formed by the delta and b chains.

The protein localises to the cell inner membrane. The enzyme catalyses ATP + H2O + 4 H(+)(in) = ADP + phosphate + 5 H(+)(out). In terms of biological role, produces ATP from ADP in the presence of a proton gradient across the membrane. The catalytic sites are hosted primarily by the beta subunits. The sequence is that of ATP synthase subunit beta from Psychrobacter arcticus (strain DSM 17307 / VKM B-2377 / 273-4).